We begin with the raw amino-acid sequence, 179 residues long: ATP synthase subunit delta 1 (179 aa).

The protein belongs to the ATPase delta chain family. F-type ATPases have 2 components, F(1) - the catalytic core - and F(0) - the membrane proton channel. F(1) has five subunits: alpha(3), beta(3), gamma(1), delta(1), epsilon(1). F(0) has three main subunits: a(1), b(2) and c(10-14). The alpha and beta chains form an alternating ring which encloses part of the gamma chain. F(1) is attached to F(0) by a central stalk formed by the gamma and epsilon chains, while a peripheral stalk is formed by the delta and b chains.

The protein resides in the cell inner membrane. F(1)F(0) ATP synthase produces ATP from ADP in the presence of a proton or sodium gradient. F-type ATPases consist of two structural domains, F(1) containing the extramembraneous catalytic core and F(0) containing the membrane proton channel, linked together by a central stalk and a peripheral stalk. During catalysis, ATP synthesis in the catalytic domain of F(1) is coupled via a rotary mechanism of the central stalk subunits to proton translocation. In terms of biological role, this protein is part of the stalk that links CF(0) to CF(1). It either transmits conformational changes from CF(0) to CF(1) or is implicated in proton conduction. In Syntrophotalea carbinolica (strain DSM 2380 / NBRC 103641 / GraBd1) (Pelobacter carbinolicus), this protein is ATP synthase subunit delta 1.